Reading from the N-terminus, the 234-residue chain is Homeobox protein ceh-51 (234 aa).

Disordered regions lie at residues 128-154 and 209-234; these read PPSF…RTPF and QIKQ…HVIS. Positions 147 to 206 form a DNA-binding region, homeobox; it reads RRGARTPFSDSQLYALRTRFEQCDTIKVDERRKLGAVIGLSPEQIKIWFQNRRFKLRKEK. The segment covering 220–234 has biased composition (basic and acidic residues); that stretch reads SAKEEAEEDQKHVIS.

This sequence belongs to the NK-2 homeobox family.

The protein localises to the nucleus. In terms of biological role, required for mesoderm development, including specification of muscle and coelomocyte precursors. The polypeptide is Homeobox protein ceh-51 (Caenorhabditis elegans).